The chain runs to 64 residues: Basic secretory protease (64 aa).

A divalent metal cation is required as a cofactor. Glycosylated.

With respect to regulation, inhibited by EDTA. Functionally, metalloprotease, digests gelatin and azocasein (in vitro). The polypeptide is Basic secretory protease (Boswellia serrata (Indian frankincense)).